The sequence spans 544 residues: Chaperonin GroEL (544 aa).

ATP-binding positions include 30–33 (TLGP), K51, 87–91 (DGTTT), G415, and D495.

It belongs to the chaperonin (HSP60) family. In terms of assembly, forms a cylinder of 14 subunits composed of two heptameric rings stacked back-to-back. Interacts with the co-chaperonin GroES.

The protein localises to the cell outer membrane. The catalysed reaction is ATP + H2O + a folded polypeptide = ADP + phosphate + an unfolded polypeptide.. Its function is as follows. Together with its co-chaperonin GroES, plays an essential role in assisting protein folding. The GroEL-GroES system forms a nano-cage that allows encapsulation of the non-native substrate proteins and provides a physical environment optimized to promote and accelerate protein folding. The chain is Chaperonin GroEL from Neisseria gonorrhoeae.